A 204-amino-acid polypeptide reads, in one-letter code: CLAVATA3/ESR (CLE)-related protein 1 (204 aa).

The N-terminal stretch at 1–21 is a signal peptide; the sequence is MAKNAMLCLLILSVVLALAFA. Positions 21–83 are required for secretion from the host cytoplasm to the host apoplasm; it reads ATNEKDDKEA…SNQLQNAYRM (63 aa). N-linked (GlcNAc...) asparagine glycosylation occurs at Asn32. Residues 116-204 form a disordered region; that stretch reads RNTGMKPQSY…TPGVPDRQHR (89 aa). Basic and acidic residues-rich tracts occupy residues 139–151, 160–172, and 181–193; these read LHNREKILEEQKR and LHNREKTLEEQKR. 3 propeptides (removed in mature form) span residues 142-150, 163-171, and 184-192; these read REKILEEQK and REKTLEEQK.

Belongs to the CLV3/ESR signal peptide family. Post-translationally, preprocessing of the precursor by host proteases leads first to the production of 21-mer CLE-containing peptides (Arg-130 to Lys-150, Arg-151 to Lys-171 and Arg-172 to Lys-192) followed by an ultimate C-term trimming to give the mature 12-mer CLE1-1 peptide. In terms of tissue distribution, highly expressed exclusively within the dorsal esophageal gland cell during syncytium formation in host plants.

Its subcellular location is the secreted. It is found in the host cytoplasm. The protein resides in the host extracellular space. The protein localises to the extracellular space. It localises to the apoplast. Mimics host plant CLE extracellular signal peptides that regulate cell fate. May play a role in the differentiation or division of feeding cells (syncytia) induced in plant roots during infection. This Globodera rostochiensis (Golden nematode worm) protein is CLAVATA3/ESR (CLE)-related protein 1.